A 491-amino-acid polypeptide reads, in one-letter code: Probable malate:quinone oxidoreductase (491 aa).

This sequence belongs to the MQO family. FAD serves as cofactor.

It catalyses the reaction (S)-malate + a quinone = a quinol + oxaloacetate. It functions in the pathway carbohydrate metabolism; tricarboxylic acid cycle; oxaloacetate from (S)-malate (quinone route): step 1/1. In Actinobacillus pleuropneumoniae serotype 5b (strain L20), this protein is Probable malate:quinone oxidoreductase.